A 655-amino-acid polypeptide reads, in one-letter code: UvrABC system protein B (655 aa).

A Helicase ATP-binding domain is found at 25–181; it reads DGINKGEKEQ…IRKLVFMQYE (157 aa). An ATP-binding site is contributed by 38 to 45; the sequence is GVTGSGKT. A Beta-hairpin motif is present at residues 91–114; it reads YYDYYQPEAYVPRTDTFIDKESSV. In terms of domain architecture, Helicase C-terminal spans 428–590; it reads QVEDLLGEVK…IVPKTTKRAL (163 aa). The UVR domain occupies 615-650; the sequence is RLLISDLENDMKEAAAKLDFERAASLRDQIATLKGL.

Belongs to the UvrB family. Forms a heterotetramer with UvrA during the search for lesions. Interacts with UvrC in an incision complex.

It localises to the cytoplasm. The UvrABC repair system catalyzes the recognition and processing of DNA lesions. A damage recognition complex composed of 2 UvrA and 2 UvrB subunits scans DNA for abnormalities. Upon binding of the UvrA(2)B(2) complex to a putative damaged site, the DNA wraps around one UvrB monomer. DNA wrap is dependent on ATP binding by UvrB and probably causes local melting of the DNA helix, facilitating insertion of UvrB beta-hairpin between the DNA strands. Then UvrB probes one DNA strand for the presence of a lesion. If a lesion is found the UvrA subunits dissociate and the UvrB-DNA preincision complex is formed. This complex is subsequently bound by UvrC and the second UvrB is released. If no lesion is found, the DNA wraps around the other UvrB subunit that will check the other stand for damage. This is UvrABC system protein B from Methanobrevibacter smithii (strain ATCC 35061 / DSM 861 / OCM 144 / PS).